The chain runs to 158 residues: Phosphopantetheine adenylyltransferase (158 aa).

Residue serine 10 coordinates substrate. Residues 10 to 11 (SF) and histidine 18 contribute to the ATP site. Substrate-binding residues include lysine 42, leucine 74, and arginine 88. ATP contacts are provided by residues 89-91 (GLR), glutamate 99, and 124-130 (YANISSS).

The protein belongs to the bacterial CoaD family. In terms of assembly, homohexamer. It depends on Mg(2+) as a cofactor.

It is found in the cytoplasm. It carries out the reaction (R)-4'-phosphopantetheine + ATP + H(+) = 3'-dephospho-CoA + diphosphate. It functions in the pathway cofactor biosynthesis; coenzyme A biosynthesis; CoA from (R)-pantothenate: step 4/5. Functionally, reversibly transfers an adenylyl group from ATP to 4'-phosphopantetheine, yielding dephospho-CoA (dPCoA) and pyrophosphate. This Vesicomyosocius okutanii subsp. Calyptogena okutanii (strain HA) protein is Phosphopantetheine adenylyltransferase.